Here is a 235-residue protein sequence, read N- to C-terminus: Aspartate/glutamate leucyltransferase (235 aa).

It belongs to the R-transferase family. Bpt subfamily.

Its subcellular location is the cytoplasm. The catalysed reaction is N-terminal L-glutamyl-[protein] + L-leucyl-tRNA(Leu) = N-terminal L-leucyl-L-glutamyl-[protein] + tRNA(Leu) + H(+). It carries out the reaction N-terminal L-aspartyl-[protein] + L-leucyl-tRNA(Leu) = N-terminal L-leucyl-L-aspartyl-[protein] + tRNA(Leu) + H(+). Functions in the N-end rule pathway of protein degradation where it conjugates Leu from its aminoacyl-tRNA to the N-termini of proteins containing an N-terminal aspartate or glutamate. This chain is Aspartate/glutamate leucyltransferase, found in Pseudomonas putida (strain ATCC 47054 / DSM 6125 / CFBP 8728 / NCIMB 11950 / KT2440).